The following is a 186-amino-acid chain: Translation initiation factor IF-3 (186 aa).

Residues 1 to 21 (MINRSSGKDRDRSRSGDKELR) are disordered.

It belongs to the IF-3 family. Monomer.

It localises to the cytoplasm. IF-3 binds to the 30S ribosomal subunit and shifts the equilibrium between 70S ribosomes and their 50S and 30S subunits in favor of the free subunits, thus enhancing the availability of 30S subunits on which protein synthesis initiation begins. The chain is Translation initiation factor IF-3 from Borrelia turicatae (strain 91E135).